The sequence spans 158 residues: C-type lectin galactose-binding isoform (158 aa).

Positions Met1–Ser23 are cleaved as a signal peptide. 3 disulfide bridges follow: Cys26-Cys37, Cys54-Cys154, and Cys129-Cys146. One can recognise a C-type lectin domain in the interval Arg33–Gln155. Ca(2+)-binding residues include Gln119, Asp121, and Glu127. The Galactose-binding signature appears at Gln119–Asp121. Residue Asn134 is glycosylated (N-linked (GlcNAc...) asparagine). Residues Asn142 and Asp143 each coordinate Ca(2+).

It belongs to the true venom lectin family. As to quaternary structure, homodimer; disulfide-linked. As to expression, expressed by the venom gland.

It localises to the secreted. Its function is as follows. Galactose-binding lectin that binds to and agglutinates erythrocytes in a calcium-dependent manner. The sequence is that of C-type lectin galactose-binding isoform from Pseudechis porphyriacus (Red-bellied black snake).